The following is a 341-amino-acid chain: Phosphoribosylformylglycinamidine cyclo-ligase (341 aa).

Belongs to the AIR synthase family.

It localises to the cytoplasm. It carries out the reaction 2-formamido-N(1)-(5-O-phospho-beta-D-ribosyl)acetamidine + ATP = 5-amino-1-(5-phospho-beta-D-ribosyl)imidazole + ADP + phosphate + H(+). Its pathway is purine metabolism; IMP biosynthesis via de novo pathway; 5-amino-1-(5-phospho-D-ribosyl)imidazole from N(2)-formyl-N(1)-(5-phospho-D-ribosyl)glycinamide: step 2/2. The protein is Phosphoribosylformylglycinamidine cyclo-ligase of Caldicellulosiruptor bescii (strain ATCC BAA-1888 / DSM 6725 / KCTC 15123 / Z-1320) (Anaerocellum thermophilum).